The following is a 291-amino-acid chain: Arabinogalactan O-methyltransferase 2 (291 aa).

Residues Trp-18–Ile-38 traverse the membrane as a helical segment.

It belongs to the methyltransferase superfamily.

The protein localises to the golgi apparatus membrane. In terms of biological role, involved in the methylation of glucuronic acid of different plant cell wall component, but mainly on side chains of arabinogalactans. This is Arabinogalactan O-methyltransferase 2 from Arabidopsis thaliana (Mouse-ear cress).